The following is a 225-amino-acid chain: Glutathione S-transferase U3 (225 aa).

The region spanning 6-86 (EGVKLIGSWA…YIDQTWTNNP (81 aa)) is the GST N-terminal domain. Residues 16–17 (SP), 43–44 (VK), 57–58 (KV), and 70–71 (ES) each bind glutathione. The GST C-terminal domain maps to 91–218 (SPYDKAMARF…EKHIEHMMKI (128 aa)). The residue at position 152 (Thr152) is a Phosphothreonine.

It belongs to the GST superfamily. Tau family.

The protein resides in the cytoplasm. It is found in the cytosol. The enzyme catalyses RX + glutathione = an S-substituted glutathione + a halide anion + H(+). Its function is as follows. May be involved in the conjugation of reduced glutathione to a wide number of exogenous and endogenous hydrophobic electrophiles and have a detoxification role against certain herbicides. The protein is Glutathione S-transferase U3 (GSTU3) of Arabidopsis thaliana (Mouse-ear cress).